The following is a 239-amino-acid chain: Ribose-5-phosphate isomerase A (239 aa).

Residues 40 to 43 (SGST), 96 to 99 (DGAD), and 110 to 113 (KGGG) each bind substrate. Glu-119 serves as the catalytic Proton acceptor. Lys-137 is a binding site for substrate.

The protein belongs to the ribose 5-phosphate isomerase family. Homodimer.

The enzyme catalyses aldehydo-D-ribose 5-phosphate = D-ribulose 5-phosphate. It functions in the pathway carbohydrate degradation; pentose phosphate pathway; D-ribose 5-phosphate from D-ribulose 5-phosphate (non-oxidative stage): step 1/1. Its function is as follows. Catalyzes the reversible conversion of ribose-5-phosphate to ribulose 5-phosphate. In Methanococcus maripaludis (strain DSM 14266 / JCM 13030 / NBRC 101832 / S2 / LL), this protein is Ribose-5-phosphate isomerase A.